Reading from the N-terminus, the 95-residue chain is Small ribosomal subunit protein bS6 (95 aa).

This sequence belongs to the bacterial ribosomal protein bS6 family.

Its function is as follows. Binds together with bS18 to 16S ribosomal RNA. The polypeptide is Small ribosomal subunit protein bS6 (Bacillus velezensis (strain DSM 23117 / BGSC 10A6 / LMG 26770 / FZB42) (Bacillus amyloliquefaciens subsp. plantarum)).